A 1189-amino-acid polypeptide reads, in one-letter code: Pesticidal crystal protein Cry1Ca (1189 aa).

Belongs to the delta endotoxin family.

In terms of biological role, promotes colloidosmotic lysis by binding to the midgut epithelial cells of many lepidopteran larvae including Spodoptera species. The protein is Pesticidal crystal protein Cry1Ca (cry1Ca) of Bacillus thuringiensis subsp. aizawai.